Reading from the N-terminus, the 160-residue chain is MIDYKKNLLFILVFISGFILFTVYSYTAEKMIYNETCTANWVIFNDQGRANLTIDFMYNKKNKTGTVALSGTWQQGNRESKSIRRNIEYTWIENYDTAHLTSKKVNKFEIMDQVDDDRLAQLIPDFYVFPEKSVSYNILKQGKHAFILSIGNRAIMHCAR.

Residues 8–28 (LLFILVFISGFILFTVYSYTA) traverse the membrane as a helical segment.

Its subcellular location is the membrane. This is an uncharacterized protein from Escherichia coli (strain K12).